A 346-amino-acid chain; its full sequence is N-acetyl-gamma-glutamyl-phosphate reductase (346 aa).

Cysteine 149 is a catalytic residue.

The protein belongs to the NAGSA dehydrogenase family. Type 1 subfamily.

The protein resides in the cytoplasm. It carries out the reaction N-acetyl-L-glutamate 5-semialdehyde + phosphate + NADP(+) = N-acetyl-L-glutamyl 5-phosphate + NADPH + H(+). Its pathway is amino-acid biosynthesis; L-arginine biosynthesis; N(2)-acetyl-L-ornithine from L-glutamate: step 3/4. Functionally, catalyzes the NADPH-dependent reduction of N-acetyl-5-glutamyl phosphate to yield N-acetyl-L-glutamate 5-semialdehyde. The sequence is that of N-acetyl-gamma-glutamyl-phosphate reductase from Geotalea daltonii (strain DSM 22248 / JCM 15807 / FRC-32) (Geobacter daltonii).